Consider the following 476-residue polypeptide: Bifunctional protein HldE (476 aa).

The interval 1 to 319 (MKVSLPAFEK…EALALHHGES (319 aa)) is ribokinase. An ATP-binding site is contributed by 195–198 (NMSE). D264 is a catalytic residue. The tract at residues 345 to 476 (MTNGCFDILH…AIIQNIMANQ (132 aa)) is cytidylyltransferase.

This sequence in the N-terminal section; belongs to the carbohydrate kinase PfkB family. It in the C-terminal section; belongs to the cytidylyltransferase family. As to quaternary structure, homodimer.

It carries out the reaction D-glycero-beta-D-manno-heptose 7-phosphate + ATP = D-glycero-beta-D-manno-heptose 1,7-bisphosphate + ADP + H(+). The catalysed reaction is D-glycero-beta-D-manno-heptose 1-phosphate + ATP + H(+) = ADP-D-glycero-beta-D-manno-heptose + diphosphate. It functions in the pathway nucleotide-sugar biosynthesis; ADP-L-glycero-beta-D-manno-heptose biosynthesis; ADP-L-glycero-beta-D-manno-heptose from D-glycero-beta-D-manno-heptose 7-phosphate: step 1/4. Its pathway is nucleotide-sugar biosynthesis; ADP-L-glycero-beta-D-manno-heptose biosynthesis; ADP-L-glycero-beta-D-manno-heptose from D-glycero-beta-D-manno-heptose 7-phosphate: step 3/4. In terms of biological role, catalyzes the phosphorylation of D-glycero-D-manno-heptose 7-phosphate at the C-1 position to selectively form D-glycero-beta-D-manno-heptose-1,7-bisphosphate. Its function is as follows. Catalyzes the ADP transfer from ATP to D-glycero-beta-D-manno-heptose 1-phosphate, yielding ADP-D-glycero-beta-D-manno-heptose. The chain is Bifunctional protein HldE from Shewanella baltica (strain OS195).